Reading from the N-terminus, the 535-residue chain is Aklavinone 12-hydroxylase RdmE (535 aa).

FAD-binding residues include Leu15, Gly16, Glu35, Gln119, and Leu143. Tyr224 acts as the Proton acceptor in catalysis. Asp308 contacts FAD. Residue Gly317 coordinates aklavinone.

It belongs to the PheA/TfdB FAD monooxygenase family. Monomer. FAD serves as cofactor.

The enzyme catalyses aklavinone + NADPH + O2 + H(+) = epsilon-rhodomycinone + NADP(+) + H2O. The protein operates within antibiotic biosynthesis; daunorubicin biosynthesis. Its pathway is antibiotic biosynthesis; carminomycin biosynthesis. It participates in antibiotic biosynthesis; rhodomycin biosynthesis. With respect to regulation, inhibited by phenylglyoxal and 2,3-butanedione. NADP provides a partial protection against inhibition by phenylglyoxal. Increasing the methanol concentration in the assay causes inhibition of the enzyme. Its function is as follows. Involved in the biosynthesis of the anthracyclines carminomycin, rhodomycin and daunorubicin (daunomycin) which are aromatic polyketide antibiotics that exhibit high cytotoxicity and are widely applied in the chemotherapy of a variety of cancers. Catalyzes the incorporation of a hydroxyl group at position C-11 of aklavinone, resulting in epsilon-rhodomycinone. It cannot accept substrates glycosylated at position C-7 and is specific for the C-9R configuration of anthracyclines. It can use both NAD or NADP but it is slowly inactivated in the presence of NADH. This chain is Aklavinone 12-hydroxylase RdmE (rdmE), found in Streptomyces purpurascens.